The following is a 718-amino-acid chain: Threonine--tRNA ligase, mitochondrial (718 aa).

Phosphoserine is present on S52. The 67-residue stretch at Q55–T121 folds into the TGS domain.

The protein belongs to the class-II aminoacyl-tRNA synthetase family. Homodimer.

Its subcellular location is the mitochondrion matrix. The enzyme catalyses tRNA(Thr) + L-threonine + ATP = L-threonyl-tRNA(Thr) + AMP + diphosphate + H(+). Functionally, catalyzes the attachment of threonine to tRNA(Thr) in a two-step reaction: threonine is first activated by ATP to form Thr-AMP and then transferred to the acceptor end of tRNA(Thr). Also edits incorrectly charged tRNA(Thr) via its editing domain. This is Threonine--tRNA ligase, mitochondrial (TARS2) from Homo sapiens (Human).